Consider the following 119-residue polypeptide: Small polypeptide DEVIL 24 (119 aa).

The interval 83 to 114 (SFTSKCTSLMKQQHARLCIIRLCATMLLRSYT) is required for DVL/RTFL small polypeptide activity. Residues 96–113 (HARLCIIRLCATMLLRSY) form a helical membrane-spanning segment.

This sequence belongs to the DVL/RTFL small polypeptides family.

Its subcellular location is the cell membrane. Its function is as follows. Small polypeptide acting as a regulatory molecule which coordinates cellular responses required for differentiation, growth and development, probably by restricting polar cell proliferation in lateral organs and coordinating socket cell recruitment and differentiation at trichome sites. This Arabidopsis thaliana (Mouse-ear cress) protein is Small polypeptide DEVIL 24.